The following is a 119-amino-acid chain: Acidic phospholipase A2 natratoxin (119 aa).

7 disulfide bridges follow: Cys-11–Cys-71, Cys-26–Cys-118, Cys-28–Cys-44, Cys-43–Cys-99, Cys-50–Cys-92, Cys-60–Cys-85, and Cys-78–Cys-90. Positions 27, 29, and 31 each coordinate Ca(2+). Residue His-47 is part of the active site. Residue Asp-48 participates in Ca(2+) binding. Asp-93 is a catalytic residue.

The protein belongs to the phospholipase A2 family. Group I subfamily. D49 sub-subfamily. Ca(2+) serves as cofactor. As to expression, expressed by the venom gland.

Its subcellular location is the secreted. The enzyme catalyses a 1,2-diacyl-sn-glycero-3-phosphocholine + H2O = a 1-acyl-sn-glycero-3-phosphocholine + a fatty acid + H(+). Its function is as follows. Snake venom phospholipase A2 (PLA2) that has an effectively inhibitory effect on A-type K(+) currents (Kv/KCN) in acutely dissociated rat dorsal root ganglion (DRG) neurons. This inhibitory effect is independent of its enzymatic activity. PLA2 catalyzes the calcium-dependent hydrolysis of the 2-acyl groups in 3-sn-phosphoglycerides. In Naja atra (Chinese cobra), this protein is Acidic phospholipase A2 natratoxin.